The primary structure comprises 510 residues: 2,3-bisphosphoglycerate-independent phosphoglycerate mutase (510 aa).

Positions 13 and 63 each coordinate Mn(2+). Catalysis depends on S63, which acts as the Phosphoserine intermediate. Residues H124, R154–D155, R186, R192, R262–R265, and K334 each bind substrate. The Mn(2+) site is built by D401, H405, D442, H443, and H461.

The protein belongs to the BPG-independent phosphoglycerate mutase family. As to quaternary structure, monomer. Mn(2+) is required as a cofactor.

The catalysed reaction is (2R)-2-phosphoglycerate = (2R)-3-phosphoglycerate. Its pathway is carbohydrate degradation; glycolysis; pyruvate from D-glyceraldehyde 3-phosphate: step 3/5. Catalyzes the interconversion of 2-phosphoglycerate and 3-phosphoglycerate. This is 2,3-bisphosphoglycerate-independent phosphoglycerate mutase from Aliivibrio fischeri (strain MJ11) (Vibrio fischeri).